The following is a 361-amino-acid chain: D-alanine--D-alanine ligase (361 aa).

In terms of domain architecture, ATP-grasp spans 140–345 (KHLFAQAGLD…YAELIEKLVA (206 aa)). Residue 173–228 (EGELGYPCFVKPANLGSSVGISKCRSREELDQAFELAFQYDRKIVVEEGVIGREIE) coordinates ATP. Positions 299, 312, and 314 each coordinate Mg(2+).

The protein belongs to the D-alanine--D-alanine ligase family. Requires Mg(2+) as cofactor. The cofactor is Mn(2+).

The protein resides in the cytoplasm. The catalysed reaction is 2 D-alanine + ATP = D-alanyl-D-alanine + ADP + phosphate + H(+). It participates in cell wall biogenesis; peptidoglycan biosynthesis. Its function is as follows. Cell wall formation. The chain is D-alanine--D-alanine ligase from Bacillus licheniformis (strain ATCC 14580 / DSM 13 / JCM 2505 / CCUG 7422 / NBRC 12200 / NCIMB 9375 / NCTC 10341 / NRRL NRS-1264 / Gibson 46).